Reading from the N-terminus, the 145-residue chain is LIM domain only protein 3 (145 aa).

2 LIM zinc-binding domains span residues 11–73 and 75–137; these read KGCA…LFGV and GNCA…GLMK.

This is LIM domain only protein 3 (LMO3) from Bos taurus (Bovine).